The sequence spans 289 residues: Protease HtpX (289 aa).

2 consecutive transmembrane segments (helical) span residues 5–25 (IVLF…VMSL) and 33–53 (MSGL…ISLL). Residue histidine 140 participates in Zn(2+) binding. Glutamate 141 is an active-site residue. Histidine 144 contributes to the Zn(2+) binding site. Transmembrane regions (helical) follow at residues 155-175 (LLQG…GGFI) and 193-213 (GIVL…TMWF). Glutamate 218 provides a ligand contact to Zn(2+).

Belongs to the peptidase M48B family. Zn(2+) serves as cofactor.

The protein localises to the cell inner membrane. The sequence is that of Protease HtpX from Xylella fastidiosa (strain M12).